A 258-amino-acid polypeptide reads, in one-letter code: Lysine-rich coiled-coil protein 1 (258 aa).

The interval 142 to 258 (DNSTSTHQAS…MLWDQSILGF (117 aa)) is disordered. Residues 150-161 (ASHKQIHQKRKR) are compositionally biased toward basic residues. Composition is skewed to basic and acidic residues over residues 162-175 (HPEE…EEWS), 183-213 (CKEI…TEKL), and 220-232 (KGRD…EERK). Residues 211-248 (EKLKNRKEKKGRDVVSKKEERKRTKKKKEQGQERTEEE) are a coiled coil.

The sequence is that of Lysine-rich coiled-coil protein 1 (KRCC1) from Pongo abelii (Sumatran orangutan).